A 544-amino-acid polypeptide reads, in one-letter code: CTP synthase (544 aa).

Residues 1-265 (MTKFIFVTGG…DNIITEQLQL (265 aa)) form an amidoligase domain region. Serine 13 contributes to the CTP binding site. Serine 13 provides a ligand contact to UTP. Residues 14–19 (SLGKGI) and aspartate 71 contribute to the ATP site. Residues aspartate 71 and glutamate 139 each contribute to the Mg(2+) site. Residues 146-148 (DIE), 186-191 (KTKPTQ), and lysine 222 each bind CTP. Residues 186 to 191 (KTKPTQ) and lysine 222 contribute to the UTP site. In terms of domain architecture, Glutamine amidotransferase type-1 spans 290–544 (KIAMVGKYVD…VKAALNNKKA (255 aa)). Glycine 353 is a binding site for L-glutamine. Catalysis depends on cysteine 380, which acts as the Nucleophile; for glutamine hydrolysis. L-glutamine contacts are provided by residues 381 to 384 (LGMQ), glutamate 404, and arginine 471. Residues histidine 517 and glutamate 519 contribute to the active site.

It belongs to the CTP synthase family. Homotetramer.

It carries out the reaction UTP + L-glutamine + ATP + H2O = CTP + L-glutamate + ADP + phosphate + 2 H(+). It catalyses the reaction L-glutamine + H2O = L-glutamate + NH4(+). The enzyme catalyses UTP + NH4(+) + ATP = CTP + ADP + phosphate + 2 H(+). The protein operates within pyrimidine metabolism; CTP biosynthesis via de novo pathway; CTP from UDP: step 2/2. Its activity is regulated as follows. Allosterically activated by GTP, when glutamine is the substrate; GTP has no effect on the reaction when ammonia is the substrate. The allosteric effector GTP functions by stabilizing the protein conformation that binds the tetrahedral intermediate(s) formed during glutamine hydrolysis. Inhibited by the product CTP, via allosteric rather than competitive inhibition. Its function is as follows. Catalyzes the ATP-dependent amination of UTP to CTP with either L-glutamine or ammonia as the source of nitrogen. Regulates intracellular CTP levels through interactions with the four ribonucleotide triphosphates. The protein is CTP synthase of Neisseria gonorrhoeae (strain ATCC 700825 / FA 1090).